A 121-amino-acid polypeptide reads, in one-letter code: uncharacterized protein (121 aa).

The 44-residue stretch at 43–86 folds into the CHCH domain; that stretch reads LKECSSHVAAFADCSKDKYISVVWECRELQQLMKNCLVEYTTSE. 2 consecutive short sequence motifs (cx9C motif) follow at residues 46 to 56 and 68 to 78; these read CSSHVAAFADC and CRELQQLMKNC. Intrachain disulfides connect cysteine 46/cysteine 78 and cysteine 56/cysteine 68.

This sequence belongs to the CMC family.

This is an uncharacterized protein from Dictyostelium discoideum (Social amoeba).